The sequence spans 97 residues: UPF0235 protein Ppha_2415 (97 aa).

Belongs to the UPF0235 family.

In Pelodictyon phaeoclathratiforme (strain DSM 5477 / BU-1), this protein is UPF0235 protein Ppha_2415.